The chain runs to 875 residues: Alanine--tRNA ligase (875 aa).

Positions 564, 568, 666, and 670 each coordinate Zn(2+).

Belongs to the class-II aminoacyl-tRNA synthetase family. In terms of assembly, homotetramer. Requires Zn(2+) as cofactor.

It localises to the cytoplasm. It carries out the reaction tRNA(Ala) + L-alanine + ATP = L-alanyl-tRNA(Ala) + AMP + diphosphate. Functionally, catalyzes the attachment of alanine to tRNA(Ala) in a two-step reaction: alanine is first activated by ATP to form Ala-AMP and then transferred to the acceptor end of tRNA(Ala). Also edits incorrectly charged Ser-tRNA(Ala) and Gly-tRNA(Ala) via its editing domain. The polypeptide is Alanine--tRNA ligase (Pectobacterium atrosepticum (strain SCRI 1043 / ATCC BAA-672) (Erwinia carotovora subsp. atroseptica)).